We begin with the raw amino-acid sequence, 72 residues long: Cytochrome b-c1 complex subunit 8-1, mitochondrial (72 aa).

The Mitochondrial matrix portion of the chain corresponds to 1–41; that stretch reads MGKQPVKLKAVVYALSPFQQKIMTGLWKDLPEKIHHKVSEN. The helical transmembrane segment at 42–58 threads the bilayer; sequence WISATLLVTPVVGTYWY. The Mitochondrial intermembrane segment spans residues 59 to 72; the sequence is AQYFKEQEKLEHRF.

The protein belongs to the UQCRQ/QCR8 family. As to quaternary structure, component of the ubiquinol-cytochrome c oxidoreductase (cytochrome b-c1 complex, complex III, CIII), a multisubunit enzyme composed of 10 subunits. The complex is composed of 3 respiratory subunits cytochrome b (MT-CYB), cytochrome c1 (CYC1-1 or CYC1-2) and Rieske protein (UCR1-1 or UCR1-2), 2 core protein subunits MPPalpha1 (or MPPalpha2) and MPPB, and 5 low-molecular weight protein subunits QCR7-1 (or QCR7-2), UCRQ-1 (or UCRQ-2), QCR9, UCRY and probably QCR6-1 (or QCR6-2). The complex exists as an obligatory dimer and forms supercomplexes (SCs) in the inner mitochondrial membrane with NADH-ubiquinone oxidoreductase (complex I, CI), resulting in different assemblies (supercomplexes SCI(1)III(2) and SCI(2)III(4)).

It localises to the mitochondrion inner membrane. In terms of biological role, component of the ubiquinol-cytochrome c oxidoreductase, a multisubunit transmembrane complex that is part of the mitochondrial electron transport chain which drives oxidative phosphorylation. The respiratory chain contains 3 multisubunit complexes succinate dehydrogenase (complex II, CII), ubiquinol-cytochrome c oxidoreductase (cytochrome b-c1 complex, complex III, CIII) and cytochrome c oxidase (complex IV, CIV), that cooperate to transfer electrons derived from NADH and succinate to molecular oxygen, creating an electrochemical gradient over the inner membrane that drives transmembrane transport and the ATP synthase. The cytochrome b-c1 complex catalyzes electron transfer from ubiquinol to cytochrome c, linking this redox reaction to translocation of protons across the mitochondrial inner membrane, with protons being carried across the membrane as hydrogens on the quinol. In the process called Q cycle, 2 protons are consumed from the matrix, 4 protons are released into the intermembrane space and 2 electrons are passed to cytochrome c. The polypeptide is Cytochrome b-c1 complex subunit 8-1, mitochondrial (UCRQ-1) (Arabidopsis thaliana (Mouse-ear cress)).